Here is a 267-residue protein sequence, read N- to C-terminus: Glutamate racemase (267 aa).

Substrate contacts are provided by residues 10 to 11 and 42 to 43; these read DS and YG. Cysteine 73 functions as the Proton donor/acceptor in the catalytic mechanism. 74 to 75 provides a ligand contact to substrate; the sequence is NT. Catalysis depends on cysteine 183, which acts as the Proton donor/acceptor. Position 184–185 (184–185) interacts with substrate; the sequence is TH.

The protein belongs to the aspartate/glutamate racemases family.

The catalysed reaction is L-glutamate = D-glutamate. Its pathway is cell wall biogenesis; peptidoglycan biosynthesis. Its function is as follows. Provides the (R)-glutamate required for cell wall biosynthesis. This chain is Glutamate racemase, found in Limosilactobacillus reuteri (strain DSM 20016) (Lactobacillus reuteri).